A 508-amino-acid polypeptide reads, in one-letter code: Steroid 17-alpha-hydroxylase/17,20 lyase (508 aa).

Asn202 lines the substrate pocket. A heme-binding site is contributed by Cys442.

The protein belongs to the cytochrome P450 family. Heme serves as cofactor.

Its subcellular location is the endoplasmic reticulum membrane. The protein resides in the microsome membrane. It carries out the reaction a C21-steroid + reduced [NADPH--hemoprotein reductase] + O2 = a 17alpha-hydroxy-C21-steroid + oxidized [NADPH--hemoprotein reductase] + H2O + H(+). The catalysed reaction is progesterone + reduced [NADPH--hemoprotein reductase] + O2 = 17alpha-hydroxyprogesterone + oxidized [NADPH--hemoprotein reductase] + H2O + H(+). It catalyses the reaction pregnenolone + reduced [NADPH--hemoprotein reductase] + O2 = 17alpha-hydroxypregnenolone + oxidized [NADPH--hemoprotein reductase] + H2O + H(+). The enzyme catalyses 17alpha-hydroxyprogesterone + reduced [NADPH--hemoprotein reductase] + O2 = androst-4-ene-3,17-dione + acetate + oxidized [NADPH--hemoprotein reductase] + H2O + 2 H(+). It carries out the reaction 17alpha-hydroxyprogesterone + reduced [NADPH--hemoprotein reductase] + O2 = 16alpha,17alpha-dihydroxyprogesterone + oxidized [NADPH--hemoprotein reductase] + H2O + H(+). The catalysed reaction is 16alpha,17alpha-dihydroxyprogesterone + reduced [NADPH--hemoprotein reductase] + O2 = 6beta,16alpha,17alpha-trihydroxyprogesterone + oxidized [NADPH--hemoprotein reductase] + H2O + H(+). It catalyses the reaction 17alpha-hydroxypregnenolone + reduced [NADPH--hemoprotein reductase] + O2 = 3beta-hydroxyandrost-5-en-17-one + acetate + oxidized [NADPH--hemoprotein reductase] + H2O + 2 H(+). The enzyme catalyses 16alpha,17alpha-dihydroxypregnenolone + reduced [NADPH--hemoprotein reductase] + O2 = 3beta,16alpha-dihydroxy-androst-5-en-17-one + acetate + oxidized [NADPH--hemoprotein reductase] + H2O + 2 H(+). It carries out the reaction 3beta-hydroxyandrost-5-en-17-one + reduced [NADPH--hemoprotein reductase] + O2 = 3beta,16alpha-dihydroxy-androst-5-en-17-one + oxidized [NADPH--hemoprotein reductase] + H2O + H(+). The catalysed reaction is androst-4-ene-3,17-dione + reduced [NADPH--hemoprotein reductase] + O2 = 16alpha-hydroxyandrost-4-ene-3,17-dione + oxidized [NADPH--hemoprotein reductase] + H2O + H(+). Its pathway is steroid hormone biosynthesis. It functions in the pathway steroid biosynthesis; glucocorticoid biosynthesis. Its activity is regulated as follows. Regulated predominantly by intracellular cAMP levels. The 17,20-lyase activity is stimulated by cytochrome b5, which acts as an allosteric effector increasing the Vmax of the lyase activity. A cytochrome P450 monooxygenase involved in corticoid and androgen biosynthesis. Catalyzes 17-alpha hydroxylation of C21 steroids, which is common for both pathways. A second oxidative step, required only for androgen synthesis, involves an acyl-carbon cleavage. The 17-alpha hydroxy intermediates, as part of adrenal glucocorticoids biosynthesis pathway, are precursors of cortisol. Hydroxylates steroid hormones, pregnenolone and progesterone to form 17-alpha hydroxy metabolites, followed by the cleavage of the C17-C20 bond to form C19 steroids, dehydroepiandrosterone (DHEA) and androstenedione. Has 16-alpha hydroxylase activity. Catalyzes 16-alpha hydroxylation of 17-alpha hydroxy pregnenolone, followed by the cleavage of the C17-C20 bond to form 16-alpha-hydroxy DHEA. Also 16-alpha hydroxylates androgens, relevant for estriol synthesis. Mechanistically, uses molecular oxygen inserting one oxygen atom into a substrate, and reducing the second into a water molecule, with two electrons provided by NADPH via cytochrome P450 reductase (CPR; NADPH-ferrihemoprotein reductase). In Pan troglodytes (Chimpanzee), this protein is Steroid 17-alpha-hydroxylase/17,20 lyase (CYP17A1).